An 877-amino-acid chain; its full sequence is Phosphoenolpyruvate carboxylase (877 aa).

Residues H138 and K544 contribute to the active site.

This sequence belongs to the PEPCase type 1 family. Requires Mg(2+) as cofactor.

The catalysed reaction is oxaloacetate + phosphate = phosphoenolpyruvate + hydrogencarbonate. Forms oxaloacetate, a four-carbon dicarboxylic acid source for the tricarboxylic acid cycle. In Vibrio vulnificus (strain CMCP6), this protein is Phosphoenolpyruvate carboxylase.